Reading from the N-terminus, the 117-residue chain is Hydrogenase maturation factor HypA (117 aa).

Position 2 (histidine 2) interacts with Ni(2+). Residues cysteine 73, cysteine 76, cysteine 89, and cysteine 92 each contribute to the Zn(2+) site.

Belongs to the HypA/HybF family.

Functionally, involved in the maturation of [NiFe] hydrogenases. Required for nickel insertion into the metal center of the hydrogenase. This Chlorobium luteolum (strain DSM 273 / BCRC 81028 / 2530) (Pelodictyon luteolum) protein is Hydrogenase maturation factor HypA.